Reading from the N-terminus, the 211-residue chain is Thiamine-phosphate synthase (211 aa).

Residues 37-41 (QLRIK) and N69 each bind 4-amino-2-methyl-5-(diphosphooxymethyl)pyrimidine. The Mg(2+) site is built by D70 and D89. Residue S108 participates in 4-amino-2-methyl-5-(diphosphooxymethyl)pyrimidine binding. 134–136 (TQT) is a binding site for 2-[(2R,5Z)-2-carboxy-4-methylthiazol-5(2H)-ylidene]ethyl phosphate. 4-amino-2-methyl-5-(diphosphooxymethyl)pyrimidine is bound at residue K137. 2-[(2R,5Z)-2-carboxy-4-methylthiazol-5(2H)-ylidene]ethyl phosphate-binding positions include G166 and 186–187 (VS).

Belongs to the thiamine-phosphate synthase family. Mg(2+) serves as cofactor.

The enzyme catalyses 2-[(2R,5Z)-2-carboxy-4-methylthiazol-5(2H)-ylidene]ethyl phosphate + 4-amino-2-methyl-5-(diphosphooxymethyl)pyrimidine + 2 H(+) = thiamine phosphate + CO2 + diphosphate. It carries out the reaction 2-(2-carboxy-4-methylthiazol-5-yl)ethyl phosphate + 4-amino-2-methyl-5-(diphosphooxymethyl)pyrimidine + 2 H(+) = thiamine phosphate + CO2 + diphosphate. It catalyses the reaction 4-methyl-5-(2-phosphooxyethyl)-thiazole + 4-amino-2-methyl-5-(diphosphooxymethyl)pyrimidine + H(+) = thiamine phosphate + diphosphate. It participates in cofactor biosynthesis; thiamine diphosphate biosynthesis; thiamine phosphate from 4-amino-2-methyl-5-diphosphomethylpyrimidine and 4-methyl-5-(2-phosphoethyl)-thiazole: step 1/1. Functionally, condenses 4-methyl-5-(beta-hydroxyethyl)thiazole monophosphate (THZ-P) and 2-methyl-4-amino-5-hydroxymethyl pyrimidine pyrophosphate (HMP-PP) to form thiamine monophosphate (TMP). The sequence is that of Thiamine-phosphate synthase from Salmonella paratyphi B (strain ATCC BAA-1250 / SPB7).